Consider the following 110-residue polypeptide: Large ribosomal subunit protein uL22 (110 aa).

The protein belongs to the universal ribosomal protein uL22 family. Part of the 50S ribosomal subunit.

Functionally, this protein binds specifically to 23S rRNA; its binding is stimulated by other ribosomal proteins, e.g. L4, L17, and L20. It is important during the early stages of 50S assembly. It makes multiple contacts with different domains of the 23S rRNA in the assembled 50S subunit and ribosome. The globular domain of the protein is located near the polypeptide exit tunnel on the outside of the subunit, while an extended beta-hairpin is found that lines the wall of the exit tunnel in the center of the 70S ribosome. The protein is Large ribosomal subunit protein uL22 of Haemophilus influenzae (strain 86-028NP).